Reading from the N-terminus, the 346-residue chain is Tyrosine--tRNA ligase (346 aa).

Tyr35 lines the L-tyrosine pocket. Residues 40–48 (PTGEMHIGH) carry the 'HIGH' region motif. L-tyrosine-binding residues include Tyr162, Gln166, Asp169, and Gln184.

It belongs to the class-I aminoacyl-tRNA synthetase family. TyrS type 3 subfamily. In terms of assembly, homodimer.

The protein localises to the cytoplasm. It catalyses the reaction tRNA(Tyr) + L-tyrosine + ATP = L-tyrosyl-tRNA(Tyr) + AMP + diphosphate + H(+). Catalyzes the attachment of tyrosine to tRNA(Tyr) in a two-step reaction: tyrosine is first activated by ATP to form Tyr-AMP and then transferred to the acceptor end of tRNA(Tyr). In Haloarcula marismortui (strain ATCC 43049 / DSM 3752 / JCM 8966 / VKM B-1809) (Halobacterium marismortui), this protein is Tyrosine--tRNA ligase.